The chain runs to 301 residues: Protein KTI12 homolog (301 aa).

8–15 (GQPCSGKS) is an ATP binding site. Residues 262–275 (LRRTFIKLAGQYSL) form a calmodulin-binding region.

It belongs to the KTI12 family. As to quaternary structure, interacts with the elongator complex. Binds to calmodulin in a calcium-dependent manner.

It is found in the cytoplasm. The protein resides in the nucleus. In terms of biological role, elongator complex-associated factor that is not a structural subunit but rather transiently contacts the complex. Regulates both meristem activity and organ growth; acts as a positive regulator of adaxial leaf patterning. Required for an early step in synthesis of 5-carbamoylmethyl (ncm5) groups present on uridines (ncm5U) at the wobble position in tRNA. This Oryza sativa subsp. indica (Rice) protein is Protein KTI12 homolog.